A 288-amino-acid polypeptide reads, in one-letter code: Protease HtpX (288 aa).

2 helical membrane-spanning segments follow: residues 4–24 (ILLFLATNFAVLFVFNIILTL) and 33–53 (VGLLIFATLFGFTGSIISLLM). H139 provides a ligand contact to Zn(2+). The active site involves E140. Residue H143 coordinates Zn(2+). The next 2 helical transmembrane spans lie at 146–166 (SGDMVTMTLLQGVLNTFVIFI) and 186–206 (IYFMISMVLELVFGVLASMIA). Residue E214 coordinates Zn(2+).

It belongs to the peptidase M48B family. Zn(2+) is required as a cofactor.

The protein localises to the cell inner membrane. The protein is Protease HtpX of Histophilus somni (strain 2336) (Haemophilus somnus).